The primary structure comprises 448 residues: Guanine deaminase (448 aa).

Positions 74 and 76 each coordinate Zn(2+). Substrate is bound by residues 76–79 (HAPQ), 204–205 (RF), 231–234 (HISE), and Asp-319. Zn(2+)-binding residues include His-231 and Asp-319.

This sequence belongs to the metallo-dependent hydrolases superfamily. ATZ/TRZ family. The cofactor is Zn(2+).

The enzyme catalyses guanine + H2O + H(+) = xanthine + NH4(+). The protein operates within purine metabolism; guanine degradation; xanthine from guanine: step 1/1. Its activity is regulated as follows. Strongly inhibited by p-chloromercuribenzoate (PCMB). Potassium cyanide (KCN) strongly inhibits activity towards 7,8-dihydropterin but has almost no effect on activity towards guanine. Pterin inhibits activity towards guanine but has little effect on activity towards 7,8-dihydropterin. In terms of biological role, catalyzes the hydrolytic deamination of guanine, producing xanthine and ammonia. Also has 7,8-dihydropterin deaminase activity, which plays a role in synthesis of the red eye pigment aurodrosopterin. The sequence is that of Guanine deaminase from Drosophila melanogaster (Fruit fly).